The primary structure comprises 132 residues: Small ribosomal subunit protein uS8 (132 aa).

It belongs to the universal ribosomal protein uS8 family. In terms of assembly, part of the 30S ribosomal subunit. Contacts proteins S5 and S12.

One of the primary rRNA binding proteins, it binds directly to 16S rRNA central domain where it helps coordinate assembly of the platform of the 30S subunit. This chain is Small ribosomal subunit protein uS8, found in Roseiflexus castenholzii (strain DSM 13941 / HLO8).